The primary structure comprises 338 residues: MSKPIVLSGVQPSGELSIGNYLGALRQWQQMQDDYDCQYCVVDLHAVTVRQDPKALHEATLDALAICLAVGVDPKKSTLFVQSHVPEHAQLGWLLNCYTQMGELSRMTQFKDKSARYANDVNVGLFDYPVLMAADILLYGAHQVPVGSDQKQHLELARDIATRFNNIYSPESPIFTVPEPYIPTVNARVMSLQDATKKMSKSDDNRKNVITLLEEPKSIIKKINKAQTDTETPPSIRHDVENKAGIANLMGLYSAATGMSFEEIEAKYKGVEMYGPFKKDVGEAVVAMLEPIQEEYRRIRADRAFMDEVMKQGAEKASARAAETLKKAYEAVGFVARP.

ATP-binding positions include 11–13 (QPS) and 19–20 (GN). A 'HIGH' region motif is present at residues 12–20 (PSGELSIGN). Residue Asp-135 participates in L-tryptophan binding. ATP contacts are provided by residues 147 to 149 (GSD), Val-189, and 198 to 202 (KMSKS). The 'KMSKS' region signature appears at 198–202 (KMSKS).

Belongs to the class-I aminoacyl-tRNA synthetase family. As to quaternary structure, homodimer.

Its subcellular location is the cytoplasm. It carries out the reaction tRNA(Trp) + L-tryptophan + ATP = L-tryptophyl-tRNA(Trp) + AMP + diphosphate + H(+). Functionally, catalyzes the attachment of tryptophan to tRNA(Trp). The protein is Tryptophan--tRNA ligase of Vibrio parahaemolyticus serotype O3:K6 (strain RIMD 2210633).